Reading from the N-terminus, the 316-residue chain is Solute carrier family 25 member 32 (316 aa).

3 Solcar repeats span residues 20–109, 118–209, and 222–306; these read HVRY…IKSY, LEPL…LKLK, and LSTA…VSHF. The next 6 membrane-spanning stretches (helical) occupy residues 26-46, 89-106, 123-143, 185-203, 227-243, and 281-300; these read LVAGVSGGVLSNLALHPLDLV, VWGAGLSWGLYFFFYNAI, YLVSAAEAGAMTLCITNPLWV, GFVPGLFGTSHGALQFMAY, YISVAALSKIFAVAATY, and GIAPNLIRVTPACCITFVVY.

The protein belongs to the mitochondrial carrier (TC 2.A.29) family.

It localises to the mitochondrion inner membrane. The enzyme catalyses FAD(in) = FAD(out). Functionally, facilitates flavin adenine dinucleotide (FAD) translocation across the mitochondrial inner membrane into the mitochondrial matrix where it acts as a redox cofactor to assist flavoenzyme activities in fundamental metabolic processes including fatty acid beta-oxidation, amino acid and choline metabolism as well as mitochondrial electron transportation. In particular, provides FAD to DLD dehydrogenase of the glycine cleavage system, part of mitochondrial one-carbon metabolic pathway involved in neural tube closure in early embryogenesis. This chain is Solute carrier family 25 member 32, found in Mus musculus (Mouse).